The sequence spans 29 residues: Kappa-theraphotoxin-Ps1a (29 aa).

Cystine bridges form between C2/C16, C9/C21, and C15/C25. The residue at position 29 (I29) is an Isoleucine amide.

This sequence belongs to the neurotoxin 30 (phrixotoxin) family. As to expression, expressed by the venom gland.

The protein localises to the secreted. In terms of biological role, potent and specific blocker of Kv4.2/KCND2 (IC(50)=5 nM) and Kv4.3/KCND3 (IC(50)=28 nM) potassium channels. Acts by altering the gating properties of these channels. Also shows moderate inhibition on human voltage-gated sodium channel Nav1.7/SCN9A activation (IC(50)=423 nM). The chain is Kappa-theraphotoxin-Ps1a from Paraphysa scrofa (Chilean copper tarantula).